The following is a 202-amino-acid chain: Sterile alpha motif domain-containing protein 10 (202 aa).

The interval 1–22 (MFTELRSKLSPPRARAGAVRPG) is disordered. An SAM domain is found at 118–184 (WSQQDVCKWL…LQQVLHLQVR (67 aa)).

This Mus musculus (Mouse) protein is Sterile alpha motif domain-containing protein 10.